We begin with the raw amino-acid sequence, 925 residues long: Bifunctional imidazolonepropionase/histidine ammonia-lyase (925 aa).

The interval 1 to 414 is imidazolonepropionase; it reads MTKNSSTVFT…IKPHVRMEPF (414 aa). Fe(3+) contacts are provided by His-73 and His-75. 2 residues coordinate Zn(2+): His-73 and His-75. Positions 82, 145, and 178 each coordinate 4-imidazolone-5-propanoate. Tyr-145 contacts N-formimidoyl-L-glutamate. Fe(3+) is bound at residue His-243. His-243 is a Zn(2+) binding site. Gln-246 contributes to the 4-imidazolone-5-propanoate binding site. Position 318 (Asp-318) interacts with Fe(3+). Residue Asp-318 coordinates Zn(2+). N-formimidoyl-L-glutamate-binding residues include Asn-320 and Gly-322. Thr-323 provides a ligand contact to 4-imidazolone-5-propanoate. Residues 415 to 925 form a histidine ammonia-lyase region; that stretch reads MTIILKPGSV…SAGILPDLEA (511 aa). The segment at residues 556-558 is a cross-link (5-imidazolinone (Ala-Gly)); sequence ASG. Ser-557 is subject to 2,3-didehydroalanine (Ser).

It in the N-terminal section; belongs to the metallo-dependent hydrolases superfamily. HutI family. In the C-terminal section; belongs to the PAL/histidase family. It depends on Zn(2+) as a cofactor. Requires Fe(3+) as cofactor. In terms of processing, contains an active site 4-methylidene-imidazol-5-one (MIO), which is formed autocatalytically by cyclization and dehydration of residues Ala-Ser-Gly.

The protein resides in the cytoplasm. It carries out the reaction 4-imidazolone-5-propanoate + H2O = N-formimidoyl-L-glutamate. The enzyme catalyses L-histidine = trans-urocanate + NH4(+). The protein operates within amino-acid degradation; L-histidine degradation into L-glutamate; N-formimidoyl-L-glutamate from L-histidine: step 1/3. It functions in the pathway amino-acid degradation; L-histidine degradation into L-glutamate; N-formimidoyl-L-glutamate from L-histidine: step 3/3. In terms of biological role, catalyzes the hydrolytic cleavage of the carbon-nitrogen bond in imidazolone-5-propanoate to yield N-formimidoyl-L-glutamate. It is the third step in the universal histidine degradation pathway. The chain is Bifunctional imidazolonepropionase/histidine ammonia-lyase (hutIH) from Brucella melitensis biotype 1 (strain ATCC 23456 / CCUG 17765 / NCTC 10094 / 16M).